The primary structure comprises 474 residues: MFS transporter SAT21 (474 aa).

6 consecutive transmembrane segments (helical) span residues 7-27 (LVLP…LEVP), 64-84 (LVVG…ILYF), 101-121 (CVGY…HQVF), 131-151 (LFLF…AFVA), 162-182 (FLFL…ALAT), and 189-209 (LFLP…LLQM). The disordered stretch occupies residues 220–252 (KVVGSTSDQTEPFLRSSSNSSQESGTAAPAIDP). Over residues 222–244 (VGSTSDQTEPFLRSSSNSSQESG) the composition is skewed to polar residues. N238 is a glycosylation site (N-linked (GlcNAc...) asparagine). The next 6 helical transmembrane spans lie at 276–296 (FICY…AFIF), 315–335 (LALS…ANAT), 346–366 (INIG…IMAW), 374–394 (FIFS…LQGV), 406–426 (SIFA…GPLM), and 445–465 (FLAS…LWAL).

It belongs to the major facilitator superfamily.

It localises to the cell membrane. Functionally, MFS transporter; part of the satratoxin SC3 cluster involved in the biosynthesis of satratoxins, trichothecene mycotoxins that are associated with human food poisonings. Satratoxins are suggested to be made by products of multiple gene clusters (SC1, SC2 and SC3) that encode 21 proteins in all, including polyketide synthases, acetyltransferases, and other enzymes expected to modify the trichothecene skeleton. SC1 encodes 10 proteins, SAT1 to SAT10. The largest are SAT8, which encodes a putative polyketide synthase (PKS) with a conventional non-reducing architecture, and SAT10, a putative protein containing four ankyrin repeats and thus may be involved in protein scaffolding. The putative short-chain reductase SAT3 may assist the PKS in some capacity. SAT6 contains a secretory lipase domain and acts probably as a trichothecene esterase. SAT5 encodes a putative acetyltransferase, and so, with SAT6, may affect endogenous protection from toxicity. The probable transcription factor SAT9 may regulate the expression of the SC1 cluster. SC2 encodes proteins SAT11 to SAT16, the largest of which encodes the putative reducing PKS SAT13. SAT11 is a cytochrome P450 monooxygenase, while SAT14 and SAT16 are probable acetyltransferases. The SC2 cluster may be regulated by the transcription factor SAT15. SC3 is a small cluster that encodes 5 proteins, SAT17 to SAT21. SAT21 is a putative MFS-type transporter which may have a role in exporting secondary metabolites. The four other proteins putatively encoded in SC3 include the taurine hydroxylase-like protein SAT17, the O-methyltransferase SAT18, the acetyltransferase SAT19, and the Cys6-type zinc finger SAT20, the latter being probably involved in regulation of SC3 expression. This chain is MFS transporter SAT21, found in Stachybotrys chartarum (strain CBS 109288 / IBT 7711) (Toxic black mold).